The following is a 451-amino-acid chain: MSIQSGEILETVKMVADQNFDVRTITIGIDLHDCISTDIDVLNQNIYNKITTVGKDLVATAKYLSAKYGVPIVNQRISVTPIAQIAAATHADSYVSVAQTLDKAAKAIGVSFIGGFSALVQKGMSPSDEVLIRSIPEAMKTTDIVCSSINIGSTRAGINMDAVRLAGETIKRTAEITLEGFGCAKIVVFCNAVEDNPFMAGAFHGSGEADAVINVGVSGPGVVKAALENSDATTLTEVAEVVKKTAFKITRVGELIGREASKMLNIPFGILDLSLAPTPAVGDSVARILEEMGLSVCGTHGTTAALALLNDAVKKGGMMASSAVGGLSGAFIPVSEDEGMIAAAEAGVLTLDKLEAMTAVCSVGLDMIAVPGDTPAHTISGIIADEAAIGMINSKTTAVRIIPVTGKTVGDSVEFGGLLGYAPVMPVKEGSCEVFVNRGGRIPAPVQSMKN.

Belongs to the UPF0210 family. As to quaternary structure, homodimer.

This Neisseria meningitidis serogroup A / serotype 4A (strain DSM 15465 / Z2491) protein is UPF0210 protein NMA1908.